We begin with the raw amino-acid sequence, 250 residues long: mRNA-decapping protein g5R (250 aa).

One can recognise a Nudix hydrolase domain in the interval 97–243; sequence QKFRKNWLLP…IIGPAFNFIK (147 aa). The short motif at 132–153 is the Nudix box element; sequence GKPKEDESDLTCAIREFEEETG. E138 is a binding site for Mg(2+). E147 functions as the Nucleophile in the catalytic mechanism. E151 and D173 together coordinate Mg(2+).

This sequence belongs to the Nudix hydrolase family. DIPP subfamily. As to quaternary structure, interacts with host RPL23A. Mg(2+) is required as a cofactor. It depends on Mn(2+) as a cofactor.

It localises to the host rough endoplasmic reticulum. It carries out the reaction diphospho-myo-inositol polyphosphate + H2O = myo-inositol polyphosphate + phosphate.. Its function is as follows. Decapping enzyme required for the removal of the 5'-end m7GpppN cap tethered to viral and host mRNAs to allow their decay in cells. May therefore accelerate viral and cellular mRNA turnover to eliminate competing host mRNAs and allow stage-specific synthesis of viral proteins. Acceleration of the turnover of cellular transcripts may even promote the shutoff of host protein synthesis. In addition to the mRNA cap, g5R also efficiently hydrolyzes diphosphoinositol polyphosphates. Down-regulation of the level of PP-InsP5 (diphosphoinositol pentakisphosphate) may play a role in viral manipulation of the cellular secretory pathway, a step necessary for the formation of virions. Binds viral and cellular poly(A) mRNAs, thereby decreasing both types of mRNAs. The protein is mRNA-decapping protein g5R of African swine fever virus (isolate Tick/South Africa/Pretoriuskop Pr4/1996) (ASFV).